The primary structure comprises 128 residues: MADITKQDVIDFIANMTVLELSELITELEEKFGVSAAAPVAMMAGGMPAGGDAGAAEEKTEFDVVLLTSGDKKIQVIKEVRAITGLGLKEAKALVEEAPKPVKEGVPKDEAEKLKAQLEGAGAQVEIK.

This sequence belongs to the bacterial ribosomal protein bL12 family. As to quaternary structure, homodimer. Part of the ribosomal stalk of the 50S ribosomal subunit. Forms a multimeric L10(L12)X complex, where L10 forms an elongated spine to which 2 to 4 L12 dimers bind in a sequential fashion. Binds GTP-bound translation factors.

Its function is as follows. Forms part of the ribosomal stalk which helps the ribosome interact with GTP-bound translation factors. Is thus essential for accurate translation. This chain is Large ribosomal subunit protein bL12, found in Desulfosudis oleivorans (strain DSM 6200 / JCM 39069 / Hxd3) (Desulfococcus oleovorans).